Here is a 282-residue protein sequence, read N- to C-terminus: Shikimate dehydrogenase (NADP(+)) (282 aa).

Residues Ser16–Ser18 and Thr63 contribute to the shikimate site. Lys67 serves as the catalytic Proton acceptor. Shikimate-binding residues include Asn88 and Asp103. NADP(+) is bound by residues Gly128 to Ala132 and Gly243.

Belongs to the shikimate dehydrogenase family. In terms of assembly, homodimer.

It catalyses the reaction shikimate + NADP(+) = 3-dehydroshikimate + NADPH + H(+). It functions in the pathway metabolic intermediate biosynthesis; chorismate biosynthesis; chorismate from D-erythrose 4-phosphate and phosphoenolpyruvate: step 4/7. In terms of biological role, involved in the biosynthesis of the chorismate, which leads to the biosynthesis of aromatic amino acids. Catalyzes the reversible NADPH linked reduction of 3-dehydroshikimate (DHSA) to yield shikimate (SA). This is Shikimate dehydrogenase (NADP(+)) from Xylella fastidiosa (strain 9a5c).